A 569-amino-acid polypeptide reads, in one-letter code: BTB/POZ domain-containing protein At3g50840 (569 aa).

One can recognise a BTB domain in the interval 18–87; sequence SDIEIEVDDI…SYGFKVDISV (70 aa). Residues 194 to 459 enclose the NPH3 domain; it reads ELWFEDLTEL…VQVLFLEQLQ (266 aa). Positions 240–259 are enriched in low complexity; sequence ISRSSSASSSSSSSSTTIAS. The tract at residues 240 to 261 is disordered; it reads ISRSSSASSSSSSSSTTIASEN. Position 400 is a phosphotyrosine (Y400).

It belongs to the NPH3 family.

It functions in the pathway protein modification; protein ubiquitination. Its function is as follows. May act as a substrate-specific adapter of an E3 ubiquitin-protein ligase complex (CUL3-RBX1-BTB) which mediates the ubiquitination and subsequent proteasomal degradation of target proteins. The chain is BTB/POZ domain-containing protein At3g50840 from Arabidopsis thaliana (Mouse-ear cress).